The sequence spans 412 residues: Putative competence-damage inducible protein (412 aa).

The protein belongs to the CinA family.

In Bacillus cereus (strain ATCC 14579 / DSM 31 / CCUG 7414 / JCM 2152 / NBRC 15305 / NCIMB 9373 / NCTC 2599 / NRRL B-3711), this protein is Putative competence-damage inducible protein.